Here is a 74-residue protein sequence, read N- to C-terminus: Translation initiation factor IF-1 (74 aa).

Residues 1 to 73 form the S1-like domain; that stretch reads MAKKDDIIEF…TKGRITYRGK (73 aa).

It belongs to the IF-1 family. As to quaternary structure, component of the 30S ribosomal translation pre-initiation complex which assembles on the 30S ribosome in the order IF-2 and IF-3, IF-1 and N-formylmethionyl-tRNA(fMet); mRNA recruitment can occur at any time during PIC assembly.

It is found in the cytoplasm. One of the essential components for the initiation of protein synthesis. Stabilizes the binding of IF-2 and IF-3 on the 30S subunit to which N-formylmethionyl-tRNA(fMet) subsequently binds. Helps modulate mRNA selection, yielding the 30S pre-initiation complex (PIC). Upon addition of the 50S ribosomal subunit IF-1, IF-2 and IF-3 are released leaving the mature 70S translation initiation complex. The chain is Translation initiation factor IF-1 from Psychrobacter sp. (strain PRwf-1).